Reading from the N-terminus, the 60-residue chain is Large ribosomal subunit protein bL33 (60 aa).

Belongs to the bacterial ribosomal protein bL33 family.

The sequence is that of Large ribosomal subunit protein bL33 from Christiangramia forsetii (strain DSM 17595 / CGMCC 1.15422 / KT0803) (Gramella forsetii).